We begin with the raw amino-acid sequence, 39 residues long: Natriuretic peptide CnNP-b (39 aa).

A propeptide spanning residues S1–K8 is cleaved from the precursor. A disulfide bridge connects residues C12 and C28. Residues I20–S39 are disordered.

It belongs to the natriuretic peptide family. Expressed by the venom gland.

The protein localises to the secreted. In terms of biological role, snake venom natriuretic peptide that targets both NPR1 and NPR2. Exhibits hypotensive and vasodepressor activities. The chain is Natriuretic peptide CnNP-b from Cryptophis nigrescens (Eastern small-eyed snake).